Consider the following 169-residue polypeptide: MTDNFLSNSSQKQGRLSAWLTIHRLSHRPLGFDYQGVEIVEVRPEDWPSVAVSLYVYGFNYLRLQCGYDVFPGGPLASIYYLTKVQDGADQPEEVCIKIFVSRDNPKIPSAFWIWKSADFQERESYDMLGIIYESHPHLKRILMPESWLGWPLRKDYITPDFFELQDAY.

This sequence belongs to the complex I 30 kDa subunit family. NDH is composed of at least 16 different subunits, 5 of which are encoded in the nucleus.

The protein resides in the plastid. The protein localises to the chloroplast thylakoid membrane. The enzyme catalyses a plastoquinone + NADH + (n+1) H(+)(in) = a plastoquinol + NAD(+) + n H(+)(out). It carries out the reaction a plastoquinone + NADPH + (n+1) H(+)(in) = a plastoquinol + NADP(+) + n H(+)(out). NDH shuttles electrons from NAD(P)H:plastoquinone, via FMN and iron-sulfur (Fe-S) centers, to quinones in the photosynthetic chain and possibly in a chloroplast respiratory chain. The immediate electron acceptor for the enzyme in this species is believed to be plastoquinone. Couples the redox reaction to proton translocation, and thus conserves the redox energy in a proton gradient. The polypeptide is NAD(P)H-quinone oxidoreductase subunit J, chloroplastic (Staurastrum punctulatum (Green alga)).